We begin with the raw amino-acid sequence, 113 residues long: Putative insulin-like growth factor 2-associated protein (113 aa).

Expressed in fetal and adult liver.

The sequence is that of Putative insulin-like growth factor 2-associated protein from Homo sapiens (Human).